The following is a 124-amino-acid chain: Fluoride-specific ion channel FluC (124 aa).

4 consecutive transmembrane segments (helical) span residues 4–24 (IFYI…TTLV), 35–55 (YATF…FGYL), 63–83 (PYLK…FSAF), and 96–116 (ILIA…ATWT). Na(+) contacts are provided by Gly-75 and Thr-78.

Belongs to the fluoride channel Fluc/FEX (TC 1.A.43) family.

It is found in the cell inner membrane. The catalysed reaction is fluoride(in) = fluoride(out). Na(+) is not transported, but it plays an essential structural role and its presence is essential for fluoride channel function. In terms of biological role, fluoride-specific ion channel. Important for reducing fluoride concentration in the cell, thus reducing its toxicity. In Flavobacterium psychrophilum (strain ATCC 49511 / DSM 21280 / CIP 103535 / JIP02/86), this protein is Fluoride-specific ion channel FluC.